The following is a 207-amino-acid chain: Transcriptional regulator GfcR (207 aa).

Belongs to the purine/pyrimidine phosphoribosyltransferase family. GfcR subfamily.

The chain is Transcriptional regulator GfcR from Methanocella arvoryzae (strain DSM 22066 / NBRC 105507 / MRE50).